A 703-amino-acid chain; its full sequence is Polyribonucleotide nucleotidyltransferase (703 aa).

Mg(2+) contacts are provided by Asp-482 and Asp-488. In terms of domain architecture, KH spans 549–607 (PKAQVMKIPEDKVGLVIGPAGKNIKYIKEQFGASVWIDGANAYINAPTIEAVNKAADFI). The S1 motif domain occupies 617–679 (GGVYEGKVIR…EQNRLNLCSP (63 aa)). The segment at 677–703 (CSPDYQKPENQERPRKEQLNRKPHHRK) is disordered. Residues 682 to 696 (QKPENQERPRKEQLN) show a composition bias toward basic and acidic residues.

It belongs to the polyribonucleotide nucleotidyltransferase family. It depends on Mg(2+) as a cofactor.

Its subcellular location is the cytoplasm. The catalysed reaction is RNA(n+1) + phosphate = RNA(n) + a ribonucleoside 5'-diphosphate. Functionally, involved in mRNA degradation. Catalyzes the phosphorolysis of single-stranded polyribonucleotides processively in the 3'- to 5'-direction. The chain is Polyribonucleotide nucleotidyltransferase from Hydrogenobaculum sp. (strain Y04AAS1).